Reading from the N-terminus, the 246-residue chain is 4-hydroxy-tetrahydrodipicolinate reductase (246 aa).

Residue 7 to 12 (GCSGRM) participates in NAD(+) binding. NADP(+) is bound at residue arginine 34. NAD(+)-binding positions include 76–78 (ATT) and 102–105 (CPNT). Catalysis depends on histidine 135, which acts as the Proton donor/acceptor. Residue histidine 136 coordinates (S)-2,3,4,5-tetrahydrodipicolinate. Residue lysine 139 is the Proton donor of the active site. A (S)-2,3,4,5-tetrahydrodipicolinate-binding site is contributed by 145–146 (GT).

This sequence belongs to the DapB family.

The protein resides in the cytoplasm. The catalysed reaction is (S)-2,3,4,5-tetrahydrodipicolinate + NAD(+) + H2O = (2S,4S)-4-hydroxy-2,3,4,5-tetrahydrodipicolinate + NADH + H(+). The enzyme catalyses (S)-2,3,4,5-tetrahydrodipicolinate + NADP(+) + H2O = (2S,4S)-4-hydroxy-2,3,4,5-tetrahydrodipicolinate + NADPH + H(+). The protein operates within amino-acid biosynthesis; L-lysine biosynthesis via DAP pathway; (S)-tetrahydrodipicolinate from L-aspartate: step 4/4. Its function is as follows. Catalyzes the conversion of 4-hydroxy-tetrahydrodipicolinate (HTPA) to tetrahydrodipicolinate. The polypeptide is 4-hydroxy-tetrahydrodipicolinate reductase (Chlamydia felis (strain Fe/C-56) (Chlamydophila felis)).